A 402-amino-acid polypeptide reads, in one-letter code: Serine--glyoxylate aminotransferase (402 aa).

Lysine 201 bears the N6-(pyridoxal phosphate)lysine mark.

The protein belongs to the class-V pyridoxal-phosphate-dependent aminotransferase family. It depends on pyridoxal 5'-phosphate as a cofactor.

The catalysed reaction is glyoxylate + L-serine = 3-hydroxypyruvate + glycine. Its pathway is one-carbon metabolism; formaldehyde assimilation via serine pathway. This is Serine--glyoxylate aminotransferase from Methylorubrum extorquens (strain ATCC 14718 / DSM 1338 / JCM 2805 / NCIMB 9133 / AM1) (Methylobacterium extorquens).